A 308-amino-acid polypeptide reads, in one-letter code: Ribosomal RNA small subunit methyltransferase H (308 aa).

Residues 35-37 (GGH), D55, F79, D100, and Q107 each bind S-adenosyl-L-methionine.

The protein belongs to the methyltransferase superfamily. RsmH family.

Its subcellular location is the cytoplasm. It carries out the reaction cytidine(1402) in 16S rRNA + S-adenosyl-L-methionine = N(4)-methylcytidine(1402) in 16S rRNA + S-adenosyl-L-homocysteine + H(+). Its function is as follows. Specifically methylates the N4 position of cytidine in position 1402 (C1402) of 16S rRNA. The protein is Ribosomal RNA small subunit methyltransferase H of Dechloromonas aromatica (strain RCB).